The chain runs to 354 residues: Small ribosomal subunit protein uS2 (354 aa).

The protein belongs to the universal ribosomal protein uS2 family.

This chain is Small ribosomal subunit protein uS2, found in Methylorubrum populi (strain ATCC BAA-705 / NCIMB 13946 / BJ001) (Methylobacterium populi).